Reading from the N-terminus, the 1182-residue chain is DNA-directed RNA polymerase subunit beta (1182 aa).

Belongs to the RNA polymerase beta chain family. The RNAP catalytic core consists of 2 alpha, 1 beta, 1 beta' and 1 omega subunit. When a sigma factor is associated with the core the holoenzyme is formed, which can initiate transcription.

The enzyme catalyses RNA(n) + a ribonucleoside 5'-triphosphate = RNA(n+1) + diphosphate. Its function is as follows. DNA-dependent RNA polymerase catalyzes the transcription of DNA into RNA using the four ribonucleoside triphosphates as substrates. The sequence is that of DNA-directed RNA polymerase subunit beta from Fervidobacterium nodosum (strain ATCC 35602 / DSM 5306 / Rt17-B1).